Here is a 305-residue protein sequence, read N- to C-terminus: Ornithine carbamoyltransferase (305 aa).

Residues 47–50 (STRT), Arg-98, and 125–128 (HPCQ) contribute to the carbamoyl phosphate site. L-ornithine is bound by residues Asn-156, Asp-221, and 225 to 226 (SM). Carbamoyl phosphate is bound by residues 262-263 (CL) and Arg-290.

This sequence belongs to the aspartate/ornithine carbamoyltransferase superfamily. OTCase family.

It is found in the cytoplasm. The enzyme catalyses carbamoyl phosphate + L-ornithine = L-citrulline + phosphate + H(+). Its pathway is amino-acid biosynthesis; L-arginine biosynthesis; L-arginine from L-ornithine and carbamoyl phosphate: step 1/3. In terms of biological role, reversibly catalyzes the transfer of the carbamoyl group from carbamoyl phosphate (CP) to the N(epsilon) atom of ornithine (ORN) to produce L-citrulline. The chain is Ornithine carbamoyltransferase from Methanococcus vannielii (strain ATCC 35089 / DSM 1224 / JCM 13029 / OCM 148 / SB).